The sequence spans 310 residues: MKVLWAALVVTLLAGCGADVEPGPEVQLGKEWATWQASQPWEQALGRFWNYLRWVQTLSEQVQEQLLSSQVTEELTALMDDTMKEVKACQSELEEQLGPVTEETKARVSKELQAAQARLGADMEEVRSRLAQYRGELQAMVGQSTEELRGRLSAHLRKMRKRLLRDAEDLQRRLAVYQAGIWEGAERSVNTLREHLGPLAEQAATVHTLVSKPLQERAEAWAQRLRGRLEKAGFPVGDRLDEVREQVQEVRAKVEEQANQVRLQAEAFQGRLKSWFEPLVQDMQQKWAELVEKVQLAVGAVPTSVPSEKQ.

A signal peptide spans M1–A18. Tandem repeats lie at residues A77–G98, P99–G120, A121–G142, Q143–L164, R165–E186, R187–T208, L209–R226, and G227–Q248. Residues A77–Q248 are 8 X 22 AA approximate tandem repeats. Residues H155–R165 are LDL and other lipoprotein receptors binding. M159 to R162 serves as a coordination point for heparin. A lipid-binding and lipoprotein association region spans residues H207–M283. Residue A222–L229 participates in heparin binding. Residues N259 to Q310 are homooligomerization. The segment at R271–M283 is specificity for association with VLDL.

The protein belongs to the apolipoprotein A1/A4/E family. Homotetramer. May interact with ABCA1; functionally associated with ABCA1 in the biogenesis of HDLs. May interact with APP/A4 amyloid-beta peptide; the interaction is extremely stable in vitro but its physiological significance is unclear. May interact with MAPT. May interact with MAP2. In the cerebrospinal fluid, interacts with secreted SORL1. Interacts with PMEL; this allows the loading of PMEL luminal fragment on ILVs to induce fibril nucleation. In terms of processing, APOE exists as multiple glycosylated and sialylated glycoforms within cells and in plasma. The extent of glycosylation and sialylation are tissue and context specific. Post-translationally, glycated in plasma VLDL. Phosphorylated by FAM20C in the extracellular medium.

It localises to the secreted. The protein resides in the extracellular space. Its subcellular location is the extracellular matrix. It is found in the extracellular vesicle. The protein localises to the endosome. It localises to the multivesicular body. APOE is an apolipoprotein, a protein associating with lipid particles, that mainly functions in lipoprotein-mediated lipid transport between organs via the plasma and interstitial fluids. APOE is a core component of plasma lipoproteins and is involved in their production, conversion and clearance. Apolipoproteins are amphipathic molecules that interact both with lipids of the lipoprotein particle core and the aqueous environment of the plasma. As such, APOE associates with chylomicrons, chylomicron remnants, very low density lipoproteins (VLDL) and intermediate density lipoproteins (IDL) but shows a preferential binding to high-density lipoproteins (HDL). It also binds a wide range of cellular receptors including the LDL receptor/LDLR and the very low-density lipoprotein receptor/VLDLR that mediate the cellular uptake of the APOE-containing lipoprotein particles. Finally, APOE also has a heparin-binding activity and binds heparan-sulfate proteoglycans on the surface of cells, a property that supports the capture and the receptor-mediated uptake of APOE-containing lipoproteins by cells. The protein is Apolipoprotein E (APOE) of Ceratotherium simum cottoni (Northern white rhinoceros).